The sequence spans 254 residues: NAD-dependent protein deacylase (254 aa).

Positions 1 to 250 (MERLEEARKR…LPPSPEDQAE (250 aa)) constitute a Deacetylase sirtuin-type domain. Residue 22–41 (GAGISKPSGIPTFRDAEGLW) participates in NAD(+) binding. Positions 66 and 69 each coordinate substrate. 104 to 107 (QNVD) contacts NAD(+). His-122 acts as the Proton acceptor in catalysis. Zn(2+) is bound by residues Cys-130, Cys-133, Cys-149, and Cys-152. NAD(+) contacts are provided by residues 189–191 (GTS), 215–217 (NPE), and Ala-233.

The protein belongs to the sirtuin family. Class III subfamily. Zn(2+) serves as cofactor.

Its subcellular location is the cytoplasm. It catalyses the reaction N(6)-acetyl-L-lysyl-[protein] + NAD(+) + H2O = 2''-O-acetyl-ADP-D-ribose + nicotinamide + L-lysyl-[protein]. The catalysed reaction is N(6)-succinyl-L-lysyl-[protein] + NAD(+) + H2O = 2''-O-succinyl-ADP-D-ribose + nicotinamide + L-lysyl-[protein]. Functionally, NAD-dependent lysine deacetylase and desuccinylase that specifically removes acetyl and succinyl groups on target proteins. Modulates the activities of several proteins which are inactive in their acylated form. The polypeptide is NAD-dependent protein deacylase (Thermus thermophilus (strain ATCC BAA-163 / DSM 7039 / HB27)).